Here is a 143-residue protein sequence, read N- to C-terminus: Transcriptional regulator SlyA (143 aa).

In terms of domain architecture, HTH marR-type spans 2–135 (ESTLGSDLSR…LTNLVERLEQ (134 aa)). A DNA-binding region (H-T-H motif) is located at residues 49 to 72 (QIQLAKAIGIEQPSLVRTLDQLED).

The protein belongs to the SlyA family. Homodimer.

Transcription regulator that can specifically activate or repress expression of target genes. The protein is Transcriptional regulator SlyA of Edwardsiella tarda.